Here is a 213-residue protein sequence, read N- to C-terminus: Adenylate kinase (213 aa).

14–19 is an ATP binding site; the sequence is GSGKGT. The segment at 34-63 is NMP; sequence STGDLLRAIIREGTPNGLKAKAYLDKGAFV. Residues threonine 35, arginine 40, 61-63, 89-92, and glutamine 96 contribute to the AMP site; these read AFV and GFPR. Residues 129-162 form an LID region; it reads SRFLCPSCSRIYNTSQGHTECPDCHVPLIRRSDD. Residue arginine 130 coordinates ATP. Residues cysteine 133 and cysteine 136 each coordinate Zn(2+). 139–140 contributes to the ATP binding site; the sequence is IY. Residues cysteine 149 and cysteine 152 each coordinate Zn(2+). 2 residues coordinate AMP: arginine 159 and arginine 170. Residue asparagine 198 coordinates ATP.

This sequence belongs to the adenylate kinase family. As to quaternary structure, monomer.

It localises to the cytoplasm. The enzyme catalyses AMP + ATP = 2 ADP. It participates in purine metabolism; AMP biosynthesis via salvage pathway; AMP from ADP: step 1/1. Its function is as follows. Catalyzes the reversible transfer of the terminal phosphate group between ATP and AMP. Plays an important role in cellular energy homeostasis and in adenine nucleotide metabolism. In Chlamydia pneumoniae (Chlamydophila pneumoniae), this protein is Adenylate kinase.